Here is a 458-residue protein sequence, read N- to C-terminus: Argininosuccinate lyase (458 aa).

Belongs to the lyase 1 family. Argininosuccinate lyase subfamily.

It is found in the cytoplasm. It carries out the reaction 2-(N(omega)-L-arginino)succinate = fumarate + L-arginine. It participates in amino-acid biosynthesis; L-arginine biosynthesis; L-arginine from L-ornithine and carbamoyl phosphate: step 3/3. The chain is Argininosuccinate lyase from Bacillus velezensis (strain DSM 23117 / BGSC 10A6 / LMG 26770 / FZB42) (Bacillus amyloliquefaciens subsp. plantarum).